The chain runs to 97 residues: Signal recognition particle 19 kDa protein (97 aa).

It belongs to the SRP19 family. As to quaternary structure, part of the signal recognition particle protein translocation system, which is composed of SRP and FtsY. Archaeal SRP consists of a 7S RNA molecule of 300 nucleotides and two protein subunits: SRP54 and SRP19.

It localises to the cytoplasm. Involved in targeting and insertion of nascent membrane proteins into the cytoplasmic membrane. Binds directly to 7S RNA and mediates binding of the 54 kDa subunit of the SRP. The chain is Signal recognition particle 19 kDa protein from Methanocella arvoryzae (strain DSM 22066 / NBRC 105507 / MRE50).